The primary structure comprises 421 residues: Enolase (421 aa).

Position 161 (Gln161) interacts with (2R)-2-phosphoglycerate. Residue Glu203 is the Proton donor of the active site. 3 residues coordinate Mg(2+): Asp240, Glu283, and Asp310. Residues Lys335, Arg364, Ser365, and Lys386 each coordinate (2R)-2-phosphoglycerate. Lys335 acts as the Proton acceptor in catalysis.

It belongs to the enolase family. The cofactor is Mg(2+).

The protein resides in the cytoplasm. It localises to the secreted. Its subcellular location is the cell surface. The enzyme catalyses (2R)-2-phosphoglycerate = phosphoenolpyruvate + H2O. Its pathway is carbohydrate degradation; glycolysis; pyruvate from D-glyceraldehyde 3-phosphate: step 4/5. In terms of biological role, catalyzes the reversible conversion of 2-phosphoglycerate (2-PG) into phosphoenolpyruvate (PEP). It is essential for the degradation of carbohydrates via glycolysis. The polypeptide is Enolase (Sulfurimonas denitrificans (strain ATCC 33889 / DSM 1251) (Thiomicrospira denitrificans (strain ATCC 33889 / DSM 1251))).